The sequence spans 302 residues: 33 kDa chaperonin (302 aa).

2 cysteine pairs are disulfide-bonded: Cys-234–Cys-236 and Cys-267–Cys-270.

It belongs to the HSP33 family. In terms of processing, under oxidizing conditions two disulfide bonds are formed involving the reactive cysteines. Under reducing conditions zinc is bound to the reactive cysteines and the protein is inactive.

It localises to the cytoplasm. In terms of biological role, redox regulated molecular chaperone. Protects both thermally unfolding and oxidatively damaged proteins from irreversible aggregation. Plays an important role in the bacterial defense system toward oxidative stress. This Neisseria meningitidis serogroup B (strain ATCC BAA-335 / MC58) protein is 33 kDa chaperonin.